The chain runs to 653 residues: uncharacterized protein (653 aa).

2 helical membrane-spanning segments follow: residues 39 to 59 (AMTTLMVSLLMSSLPSGLKLI) and 207 to 227 (AVFVSIWLMVILGAAFNAFTI). The HAMP domain maps to 225 to 277 (FTITKPIRELLTGVKNIASGDFHQRISLPFGGELGALIFNFNEMAERLEKYEQ). A PAS domain is found at 286 to 356 (EKAKLETLVS…PALNDIVRKN (71 aa)). Positions 421–651 (NVSHELRTPL…CFFFDLIIAK (231 aa)) constitute a Histidine kinase domain. Phosphohistidine; by autocatalysis is present on His424.

Its subcellular location is the plastid. The protein localises to the chloroplast membrane. It carries out the reaction ATP + protein L-histidine = ADP + protein N-phospho-L-histidine.. This is an uncharacterized protein from Pyropia yezoensis (Susabi-nori).